We begin with the raw amino-acid sequence, 41 residues long: Large ribosomal subunit protein bL36 (41 aa).

It belongs to the bacterial ribosomal protein bL36 family.

This is Large ribosomal subunit protein bL36 from Xylella fastidiosa (strain 9a5c).